The chain runs to 269 residues: MVQRQINWSLIDRVRAKNPIVLNLANLVTIDKVADAVSAVGASPIMSVEPAEADEMVMLANALSINLGTINEHQATQIRTVLRAATPLKPLVLDPVAVSAVPSRLKFAHSLLNDFHFDVIRGNASEIAALVEADNTSHGIDAGKVPNQVQIAETCARRYHSIVVLTGETDIITDGQVVYENPFSAEMLTMNVGSGDMLSSIIAAFLGITTNTWDACIVATVLVSAAGVLANRYSVGLGSWQVQFFDQLSIMDTKALLEFFDESEEDYLD.

M46 is a substrate binding site. Positions 121 and 166 each coordinate ATP. G193 contributes to the substrate binding site.

It belongs to the Thz kinase family. The cofactor is Mg(2+).

The enzyme catalyses 5-(2-hydroxyethyl)-4-methylthiazole + ATP = 4-methyl-5-(2-phosphooxyethyl)-thiazole + ADP + H(+). It participates in cofactor biosynthesis; thiamine diphosphate biosynthesis; 4-methyl-5-(2-phosphoethyl)-thiazole from 5-(2-hydroxyethyl)-4-methylthiazole: step 1/1. In terms of biological role, catalyzes the phosphorylation of the hydroxyl group of 4-methyl-5-beta-hydroxyethylthiazole (THZ). The protein is Hydroxyethylthiazole kinase of Limosilactobacillus reuteri (strain DSM 20016) (Lactobacillus reuteri).